We begin with the raw amino-acid sequence, 229 residues long: Large ribosomal subunit protein uL1 (229 aa).

Belongs to the universal ribosomal protein uL1 family. Part of the 50S ribosomal subunit.

Its function is as follows. Binds directly to 23S rRNA. The L1 stalk is quite mobile in the ribosome, and is involved in E site tRNA release. In terms of biological role, protein L1 is also a translational repressor protein, it controls the translation of the L11 operon by binding to its mRNA. The polypeptide is Large ribosomal subunit protein uL1 (Caulobacter vibrioides (strain ATCC 19089 / CIP 103742 / CB 15) (Caulobacter crescentus)).